A 392-amino-acid chain; its full sequence is Small ribosomal subunit protein bS1 (392 aa).

S1 motif domains lie at 16 to 90, 108 to 173, 194 to 262, and 279 to 348; these read GDKV…LSKR, DEII…LSRK, GDVI…LSIK, and DDVI…LSIK.

It belongs to the bacterial ribosomal protein bS1 family.

In terms of biological role, binds mRNA; thus facilitating recognition of the initiation point. It is needed to translate mRNA with a short Shine-Dalgarno (SD) purine-rich sequence. This is Small ribosomal subunit protein bS1 (rpsA) from Staphylococcus haemolyticus (strain JCSC1435).